A 115-amino-acid chain; its full sequence is Protein translation factor SUI1 homolog (115 aa).

Belongs to the SUI1 family.

Functionally, probably involved in translation. The polypeptide is Protein translation factor SUI1 homolog (TIF) (Zea mays (Maize)).